A 586-amino-acid polypeptide reads, in one-letter code: Phosphomethylpyrimidine synthase (586 aa).

The tract at residues 1-59 (MKQSVSAEQIELKSSLPGSKKVYVDGPREGMKVPMREIEQSDTNGVPNPPIRVYDTSGP) is disordered. A compositionally biased stretch (basic and acidic residues) spans 22–39 (VYVDGPREGMKVPMREIE). Substrate contacts are provided by residues Asn193, Met222, Tyr251, His287, 307 to 309 (SRG), 348 to 351 (DGLR), and Glu387. Zn(2+) is bound at residue His391. Tyr414 lines the substrate pocket. Residue His455 coordinates Zn(2+). [4Fe-4S] cluster is bound by residues Cys535, Cys538, and Cys543.

This sequence belongs to the ThiC family. It depends on [4Fe-4S] cluster as a cofactor.

The catalysed reaction is 5-amino-1-(5-phospho-beta-D-ribosyl)imidazole + S-adenosyl-L-methionine = 4-amino-2-methyl-5-(phosphooxymethyl)pyrimidine + CO + 5'-deoxyadenosine + formate + L-methionine + 3 H(+). The protein operates within cofactor biosynthesis; thiamine diphosphate biosynthesis. Functionally, catalyzes the synthesis of the hydroxymethylpyrimidine phosphate (HMP-P) moiety of thiamine from aminoimidazole ribotide (AIR) in a radical S-adenosyl-L-methionine (SAM)-dependent reaction. This Bacillus cereus (strain ZK / E33L) protein is Phosphomethylpyrimidine synthase.